We begin with the raw amino-acid sequence, 251 residues long: Capsid protein (251 aa).

The Bipartite nuclear localization signal signature appears at 3–20 (KRDLPWRSMAGTSKVSRN). Residues 35 to 49 (KAAEWVNRPMYRKPR) carry the Nuclear localization signal motif. A zinc finger spans residues 63–80 (CEGPCKVQSFEQRHDISH). The short motif at 96–117 (ITHRVGKRFCVKSVYILGKIWM) is the Nuclear export signal element. Positions 195–242 (KRFWKVNNHVVYNHQEAGKYENHTENALLLYMACTHASNPVYATLKIR) match the Bipartite nuclear localization signal motif.

Belongs to the geminiviridae capsid protein family. In terms of assembly, homomultimer. Binds to single-stranded and double-stranded viral DNA. Interacts (via nuclear localization signals) with host importin alpha-1a.

Its subcellular location is the virion. It is found in the host nucleus. Its function is as follows. Encapsidates the viral DNA into characteristic twinned ('geminate') particles. Binds the genomic viral ssDNA and shuttles it into and out of the cell nucleus. The CP of bipartite geminiviruses is not required for cell-to-cell or systemic movement. The sequence is that of Capsid protein from Tomato mottle virus (isolate Florida) (ToMoV).